Reading from the N-terminus, the 287-residue chain is Glycine--tRNA ligase alpha subunit (287 aa).

It belongs to the class-II aminoacyl-tRNA synthetase family. As to quaternary structure, tetramer of two alpha and two beta subunits.

The protein resides in the cytoplasm. The enzyme catalyses tRNA(Gly) + glycine + ATP = glycyl-tRNA(Gly) + AMP + diphosphate. The protein is Glycine--tRNA ligase alpha subunit of Campylobacter jejuni subsp. jejuni serotype O:23/36 (strain 81-176).